A 117-amino-acid chain; its full sequence is Immunoglobulin heavy variable 5-10-1 (117 aa).

The N-terminal stretch at 1–19 is a signal peptide; sequence MGSTAILALLLAVLQGVCA. Positions 20 to 44 are framework-1; sequence EVQLVQSGAEVKKPGESLRISCKGS. The Ig-like domain occupies 20–117; sequence EVQLVQSGAE…SDTAMYYCAR (98 aa). C41 and C115 are disulfide-bonded. Residues 45–52 are complementarity-determining-1; sequence GYSFTSYW. The framework-2 stretch occupies residues 53 to 69; the sequence is ISWVRQMPGKGLEWMGR. Residues 70 to 77 are complementarity-determining-2; sequence IDPSDSYT. A framework-3 region spans residues 78 to 115; sequence NYSPSFQGHVTISADKSISTAYLQWSSLKASDTAMYYC. Positions 116 to 117 are complementarity-determining-3; it reads AR.

In terms of assembly, immunoglobulins are composed of two identical heavy chains and two identical light chains; disulfide-linked.

It is found in the secreted. Its subcellular location is the cell membrane. V region of the variable domain of immunoglobulin heavy chains that participates in the antigen recognition. Immunoglobulins, also known as antibodies, are membrane-bound or secreted glycoproteins produced by B lymphocytes. In the recognition phase of humoral immunity, the membrane-bound immunoglobulins serve as receptors which, upon binding of a specific antigen, trigger the clonal expansion and differentiation of B lymphocytes into immunoglobulins-secreting plasma cells. Secreted immunoglobulins mediate the effector phase of humoral immunity, which results in the elimination of bound antigens. The antigen binding site is formed by the variable domain of one heavy chain, together with that of its associated light chain. Thus, each immunoglobulin has two antigen binding sites with remarkable affinity for a particular antigen. The variable domains are assembled by a process called V-(D)-J rearrangement and can then be subjected to somatic hypermutations which, after exposure to antigen and selection, allow affinity maturation for a particular antigen. The polypeptide is Immunoglobulin heavy variable 5-10-1 (Homo sapiens (Human)).